The sequence spans 335 residues: MSVSNTVTKVEEFDFEDEALEVLETDAELTSDEELVAVEGASEDVREEFDASAKSLDATQMYLSEIGFSPLLTAEEEVLYARRALRGDEAARKRMIESNLRLVVKISRRYSNRGLALLDLIEEGNLGLIRAVEKFDPERGFRFSTYATWWIRQTIERALMNQTRTIRLPIHVVKELNIYLRTARELSQRLDHEPTPEEIALELDRPVDDVTKMLRLNERISSVDTPIGGDGDKALLDILPDSHNADPEFSTQDDDIRESLLNWLDELNPKQKEVLARRFGLLGYEPSTLEEVGREINLTRERVRQIQVEGLRRLREILVKQGLNMEALFNVEYDN.

The interval 57–90 (DATQMYLSEIGFSPLLTAEEEVLYARRALRGDEA) is sigma-70 factor domain-1. Positions 95–165 (MIESNLRLVV…ERALMNQTRT (71 aa)) are sigma-70 factor domain-2. The Interaction with polymerase core subunit RpoC motif lies at 119–122 (DLIE). Positions 175–250 (ELNIYLRTAR…DSHNADPEFS (76 aa)) are sigma-70 factor domain-3. Residues 263-316 (WLDELNPKQKEVLARRFGLLGYEPSTLEEVGREINLTRERVRQIQVEGLRRLRE) form a sigma-70 factor domain-4 region. Positions 289 to 308 (LEEVGREINLTRERVRQIQV) form a DNA-binding region, H-T-H motif.

The protein belongs to the sigma-70 factor family. RpoS subfamily. Interacts with the RNA polymerase core enzyme.

Its subcellular location is the cytoplasm. Its function is as follows. Sigma factors are initiation factors that promote the attachment of RNA polymerase to specific initiation sites and are then released. This sigma factor is the master transcriptional regulator of the stationary phase and the general stress response. May be required for the persistence of V.cholerae in aquatic habitats. The chain is RNA polymerase sigma factor RpoS from Vibrio cholerae serotype O1 (strain ATCC 39315 / El Tor Inaba N16961).